A 1030-amino-acid polypeptide reads, in one-letter code: uncharacterized protein (1030 aa).

The SWIM-type zinc finger occupies 51 to 86; that stretch reads IKVSFTAKDGELTCKCSCLANVDNCVHIVAVLLKYH. Positions 590–751 constitute a Helicase ATP-binding domain; sequence RGLEENKFGG…WSCFDFVLPS (162 aa). 603–610 lines the ATP pocket; the sequence is DEMGLGKT. The short motif at 702-705 is the DEAQ box element; the sequence is DEAQ. Residues 867–1021 enclose the Helicase C-terminal domain; the sequence is ALEIIHEAIE…EDVNFFESLT (155 aa).

It belongs to the SNF2/RAD54 helicase family.

This is an uncharacterized protein from Mycoplasma pneumoniae (strain ATCC 29342 / M129 / Subtype 1) (Mycoplasmoides pneumoniae).